The following is a 514-amino-acid chain: ATP synthase subunit alpha (514 aa).

Position 170–177 (170–177 (GDRQIGKT)) interacts with ATP.

Belongs to the ATPase alpha/beta chains family. F-type ATPases have 2 components, CF(1) - the catalytic core - and CF(0) - the membrane proton channel. CF(1) has five subunits: alpha(3), beta(3), gamma(1), delta(1), epsilon(1). CF(0) has three main subunits: a(1), b(2) and c(9-12). The alpha and beta chains form an alternating ring which encloses part of the gamma chain. CF(1) is attached to CF(0) by a central stalk formed by the gamma and epsilon chains, while a peripheral stalk is formed by the delta and b chains.

The protein resides in the cell inner membrane. It carries out the reaction ATP + H2O + 4 H(+)(in) = ADP + phosphate + 5 H(+)(out). In terms of biological role, produces ATP from ADP in the presence of a proton gradient across the membrane. The alpha chain is a regulatory subunit. In Pseudomonas putida (strain GB-1), this protein is ATP synthase subunit alpha.